The sequence spans 295 residues: MSKIVGSDKVKRGMAEMQKGGVIMDVVNAEQAKIAEAAGAVAVMALERVPSDIRAAGGVARMADPRIVEEVMNAVSIPVMAKGRIGHITEARVLEAMGVDYIDESEVLTPADEEFHLKKDEFTVPFVCGCRDLGEAARRIGEGAAMLRTKGEPGTGNIVEAVRHLRKVNAQVRKLTVMNDDEIMTEAKLLGAPYEVLKEIKALGKLPVVNFAAGGVATPADAALMMELGADGVFVGSGIFKSESPEKFAKAIVQATTHYQDYKLIGELSKELGAAMKGLDINKLSLEERMQERGW.

Position 25 (Asp25) interacts with D-ribose 5-phosphate. Catalysis depends on Lys82, which acts as the Schiff-base intermediate with D-ribose 5-phosphate. Gly154 contacts D-ribose 5-phosphate. A D-glyceraldehyde 3-phosphate-binding site is contributed by Arg166. D-ribose 5-phosphate-binding positions include Gly215 and 236 to 237 (GS).

It belongs to the PdxS/SNZ family. As to quaternary structure, in the presence of PdxT, forms a dodecamer of heterodimers.

The catalysed reaction is aldehydo-D-ribose 5-phosphate + D-glyceraldehyde 3-phosphate + L-glutamine = pyridoxal 5'-phosphate + L-glutamate + phosphate + 3 H2O + H(+). Its pathway is cofactor biosynthesis; pyridoxal 5'-phosphate biosynthesis. Its function is as follows. Catalyzes the formation of pyridoxal 5'-phosphate from ribose 5-phosphate (RBP), glyceraldehyde 3-phosphate (G3P) and ammonia. The ammonia is provided by the PdxT subunit. Can also use ribulose 5-phosphate and dihydroxyacetone phosphate as substrates, resulting from enzyme-catalyzed isomerization of RBP and G3P, respectively. In Macrococcus caseolyticus (strain JCSC5402) (Macrococcoides caseolyticum), this protein is Pyridoxal 5'-phosphate synthase subunit PdxS.